The primary structure comprises 312 residues: 4-diphosphocytidyl-2-C-methyl-D-erythritol kinase (312 aa).

The active site involves lysine 10. 105–115 (PVAGGMAGGSA) contributes to the ATP binding site. Residue aspartate 146 is part of the active site.

The protein belongs to the GHMP kinase family. IspE subfamily.

It carries out the reaction 4-CDP-2-C-methyl-D-erythritol + ATP = 4-CDP-2-C-methyl-D-erythritol 2-phosphate + ADP + H(+). The protein operates within isoprenoid biosynthesis; isopentenyl diphosphate biosynthesis via DXP pathway; isopentenyl diphosphate from 1-deoxy-D-xylulose 5-phosphate: step 3/6. In terms of biological role, catalyzes the phosphorylation of the position 2 hydroxy group of 4-diphosphocytidyl-2C-methyl-D-erythritol. The protein is 4-diphosphocytidyl-2-C-methyl-D-erythritol kinase of Corynebacterium glutamicum (strain R).